The primary structure comprises 729 residues: Palmitoyltransferase akr1 (729 aa).

A compositionally biased stretch (basic and acidic residues) spans 1–11; that stretch reads MVHHDGADAHA. The disordered stretch occupies residues 1–28; sequence MVHHDGADAHAGHAAPAQPPMKSDTATP. At 1–297 the chain is on the cytoplasmic side; the sequence is MVHHDGADAH…DRRSFMTKFT (297 aa). ANK repeat units follow at residues 76–105, 110–139, 143–172, 176–205, and 209–238; these read EGIT…EINK, SVAT…DPLI, QGYN…PVDV, YGHT…SVHA, and QGFT…DRFA. The next 2 membrane-spanning stretches (helical) occupy residues 298–318 and 319–339; these read FLWP…MPVF and VGIP…QQVI. At 340–354 the chain is on the cytoplasmic side; that stretch reads AYAPPDMRQLQKTPW. Residues 355-375 form a helical membrane-spanning segment; sequence MAGIFAGSLFLCIMNWLLHIF. Residues 376–383 lie on the Lumenal side of the membrane; the sequence is GSTMFGQD. The helical transmembrane segment at 384–404 threads the bilayer; the sequence is SAVIPNLLFAFFISMTIWFYI. Residues 405–483 are Cytoplasmic-facing; that stretch reads RCMVDDPGFV…YNCIGVNNHR (79 aa). Positions 440–490 constitute a DHHC domain; sequence NFCVTCMIRTPLRSKHCRRCQRCVAKHDHHCPWVYNCIGVNNHRHFFFYLI. Residue C470 is the S-palmitoyl cysteine intermediate of the active site. Residues 484 to 504 traverse the membrane as a helical segment; it reads HFFFYLINLTLSVVTYDWLTY. Topologically, residues 505-534 are lumenal; it reads RYLSTLSETASDECNILAPSLCRIVNADTY. Residues 535-555 form a helical membrane-spanning segment; sequence SLLTAIWASLQLTWVSMLLFV. The Cytoplasmic portion of the chain corresponds to 556 to 729; sequence QFVQVSSAMT…GYESVAGEEV (174 aa). Disordered stretches follow at residues 587–620 and 709–729; these read STGA…HGHN and TSGG…GEEV. Residues 592–603 are compositionally biased toward pro residues; that stretch reads LNPPSLPAPGPS. Positions 611-620 are enriched in basic residues; it reads HGGRHAHGHN.

This sequence belongs to the DHHC palmitoyltransferase family. AKR/ZDHHC17 subfamily.

The protein resides in the early endosome membrane. The protein localises to the golgi apparatus membrane. The enzyme catalyses L-cysteinyl-[protein] + hexadecanoyl-CoA = S-hexadecanoyl-L-cysteinyl-[protein] + CoA. Its function is as follows. Palmitoyltransferase specific for casein kinase 1. The protein is Palmitoyltransferase akr1 (ptr-1) of Neurospora crassa (strain ATCC 24698 / 74-OR23-1A / CBS 708.71 / DSM 1257 / FGSC 987).